We begin with the raw amino-acid sequence, 1038 residues long: Dorsal-ventral patterning protein Sog (1038 aa).

Over 1–53 (MANKLRKSNAIEWATATGTVPLLERSCCHSEDAALEPQASKTSHREQAPILRH) the chain is Cytoplasmic. Residues 54–74 (LSQLSHLLIIAGLLIVCLAGV) form a helical; Signal-anchor for type II membrane protein membrane-spanning segment. Residues 75–1038 (TEGRRHAPLM…QPHHQQRSSS (964 aa)) lie on the Extracellular side of the membrane. One can recognise a VWFC 1 domain in the interval 100-175 (TECQFGKVLR…LPGKCCKTCP (76 aa)). N-linked (GlcNAc...) asparagine glycosylation is found at Asn-179 and Asn-287. 4 consecutive CHRD domains span residues 197 to 337 (NMKH…KYTA), 339 to 471 (QTEL…TRAS), 474 to 588 (IFQT…PRPV), and 592 to 713 (RDSA…STKV). N-linked (GlcNAc...) asparagine glycosylation is found at Asn-520, Asn-666, Asn-752, and Asn-821. A VWFC 2 domain is found at 742 to 804 (TKCFHSGRFY…RDGECCPSCV (63 aa)). 2 VWFC domains span residues 830 to 899 (RGCR…KICP) and 939 to 1020 (GGCK…TQCR).

This sequence belongs to the chordin family. As to quaternary structure, component of a complex composed of dpp, sog and tsg. Interacts with palmitoyltransferase Hip14. In terms of processing, palmitoylated, probably by Hip14. Cleaved by metalloproteases tok and tld. Cleavage by tok during pupal development contributes to specification of the posterior crossvein in the wing. Abuts the dorsal dpp-expressing cells in a lateral stripe 14-16 cells wide. Later in embryogenesis it is expressed in neuroectoderm and in the endoderm spaced along the anterior-posterior axis of the developing gut.

It localises to the golgi apparatus membrane. It is found in the cell membrane. Its subcellular location is the secreted. Its function is as follows. Putative negative growth factor. Antagonist of dpp, a protein involved in patterning the dorsal region and in the development of the neuroectoderm; dpp inhibition is enhanced by tsg. Required for establishment of a narrow stripe of peak levels of BMP signaling in the dorsal midline of early embryos, that will give rise to the amnioserosa. During pupal development, plays a role in specification of the posterior crossvein in the wing. Exhibits both agonist and antagonist activities towards BMP signaling during pupal wing patterning. The sequence is that of Dorsal-ventral patterning protein Sog (sog) from Drosophila melanogaster (Fruit fly).